Here is a 200-residue protein sequence, read N- to C-terminus: Gamma-glutamyl-CDP-amidate hydrolase (200 aa).

Residues 20-200 enclose the Glutamine amidotransferase type-1 domain; that stretch reads ECLALDWGKL…LKEWFSLIKE (181 aa). The active-site Nucleophile is Cys-101. Catalysis depends on residues His-178 and Glu-180.

The enzyme catalyses N(5)-(cytidine 5'-diphosphoramidyl)-L-glutamine + H2O = cytidine 5'-diphosphoramidate + L-glutamate + H(+). The protein operates within capsule biogenesis; capsule polysaccharide biosynthesis. Involved in the biosynthesis of the O-methyl phosphoramidate (MeOPN) group found on the capsular polysaccharide (CPS) of C.jejuni. Catalyzes the hydrolysis of CDP-L-glutamine to L-glutamate and cytidine diphosphoramidate. The protein is Gamma-glutamyl-CDP-amidate hydrolase of Campylobacter jejuni subsp. jejuni serotype O:2 (strain ATCC 700819 / NCTC 11168).